A 229-amino-acid chain; its full sequence is Ras-related protein RABA6b (229 aa).

Position 20–27 (20–27) interacts with GTP; sequence GDSAVGKS. Positions 42–50 match the Effector region motif; sequence SKPTIGVDF. GTP-binding positions include 68–72, 126–129, and 156–157; these read DTAGQ, NKSD, and SA. S-geranylgeranyl cysteine attachment occurs at residues cysteine 226 and cysteine 227.

Belongs to the small GTPase superfamily. Rab family.

The protein localises to the cell membrane. Intracellular vesicle trafficking and protein transport. This is Ras-related protein RABA6b (RABA6B) from Arabidopsis thaliana (Mouse-ear cress).